Here is a 357-residue protein sequence, read N- to C-terminus: Uroporphyrinogen decarboxylase (357 aa).

Substrate contacts are provided by residues 27–31, D77, Y154, T209, and H327; that span reads RQAGR.

This sequence belongs to the uroporphyrinogen decarboxylase family. As to quaternary structure, homodimer.

It is found in the cytoplasm. The catalysed reaction is uroporphyrinogen III + 4 H(+) = coproporphyrinogen III + 4 CO2. Its pathway is porphyrin-containing compound metabolism; protoporphyrin-IX biosynthesis; coproporphyrinogen-III from 5-aminolevulinate: step 4/4. Catalyzes the decarboxylation of four acetate groups of uroporphyrinogen-III to yield coproporphyrinogen-III. The chain is Uroporphyrinogen decarboxylase from Nitrosococcus oceani (strain ATCC 19707 / BCRC 17464 / JCM 30415 / NCIMB 11848 / C-107).